The following is a 241-amino-acid chain: ATP synthase subunit 4, mitochondrial (241 aa).

The N-terminal 35 residues, 1–35 (MASRLARTAVGAARLRPSVVPRVLPALSTVASPRY), are a transit peptide targeting the mitochondrion.

Belongs to the eukaryotic ATPase B chain family. As to quaternary structure, F-type ATPases have 2 components, CF(1) - the catalytic core - and CF(0) - the membrane proton channel. In yeast, the dimeric form of ATP synthase consists of 17 polypeptides: alpha, beta, gamma, delta, epsilon, 4 (B), 5 (OSCP), 6 (A), 8, 9 (C), d, E (Tim11), f, g, h, i/j and k.

It localises to the mitochondrion. Its subcellular location is the mitochondrion inner membrane. Mitochondrial membrane ATP synthase (F(1)F(0) ATP synthase or Complex V) produces ATP from ADP in the presence of a proton gradient across the membrane which is generated by electron transport complexes of the respiratory chain. F-type ATPases consist of two structural domains, F(1) - containing the extramembraneous catalytic core, and F(0) - containing the membrane proton channel, linked together by a central stalk and a peripheral stalk. During catalysis, ATP synthesis in the catalytic domain of F(1) is coupled via a rotary mechanism of the central stalk subunits to proton translocation. Part of the complex F(0) domain and the peripheric stalk, which acts as a stator to hold the catalytic alpha(3)beta(3) subcomplex and subunit a/atp6 static relative to the rotary elements. The polypeptide is ATP synthase subunit 4, mitochondrial (atp-3) (Neurospora crassa (strain ATCC 24698 / 74-OR23-1A / CBS 708.71 / DSM 1257 / FGSC 987)).